A 256-amino-acid polypeptide reads, in one-letter code: uncharacterized protein (256 aa).

It belongs to the metallo-beta-lactamase superfamily.

This is an uncharacterized protein from Methanocaldococcus jannaschii (strain ATCC 43067 / DSM 2661 / JAL-1 / JCM 10045 / NBRC 100440) (Methanococcus jannaschii).